Reading from the N-terminus, the 353-residue chain is MDEINFAVLGTGGIGRRTLEVSTYKDGLTPVAACDRHGVAVNHDGLDVEEILDATEGNIAGDGTGDTEDKRVTDGGAAVKQHGDGAGIVASAQGTSTETPIDEIIAESDEIDAVLLALPNLEHDFIPRIAERFAEAEFEGVLIDVLKRSRVIGMLDDREETLVESGITFVCGAGATPGLLTGAAALAAQSFVEVEEVEIWWGVGLKSGYEDNRGTVREDIAHLDGYDIETAREMDESEIEAVIEEHDGVLEFNDMEHADDVLLERAGICDAEDVTVGGILDIRKDEKPTTTTVRVTGRTFDGKRGTNTFQLDDATSMAANVNGPALGYLKSAVRRNRAGDYGVFGPAELMPGF.

10–14 (GTGGI) provides a ligand contact to NAD(+). Lys147 (nucleophile) is an active-site residue. The residue at position 147 (Lys147) is an Allysine. 214-215 (GT) lines the NAD(+) pocket. The active-site Proton acceptor is the Glu218. Catalysis depends on His222, which acts as the Proton donor and proton acceptor.

Belongs to the BioU family. As to quaternary structure, monomer.

It catalyses the reaction (8S)-8-amino-7-oxononanoate + L-lysyl-[protein] + CO2 = (S)-2-amino-6-oxohexanoyl-[protein] + (7R,8S)-8-amino-7-(carboxyamino)nonanoate + 2 H(+). The catalysed reaction is (8S)-8-amino-7-oxononanoate + L-lysyl-[protein] + NADPH + H(+) = N(6)-[(2S,3R)-2-amino-8-carboxyoctan-3-yl]-L-lysyl-[protein] + NADP(+) + H2O. It carries out the reaction N(6)-[(2S,3R)-2-amino-8-carboxyoctan-3-yl]-L-lysyl-[protein] + CO2 + NADP(+) + H2O = (S)-2-amino-6-oxohexanoyl-[protein] + (7R,8S)-8-amino-7-(carboxyamino)nonanoate + NADPH + 3 H(+). The enzyme catalyses (8S)-8-amino-7-oxononanoate + L-lysyl-[protein] + NADH + H(+) = N(6)-[(2S,3R)-2-amino-8-carboxyoctan-3-yl]-L-lysyl-[protein] + NAD(+) + H2O. It catalyses the reaction N(6)-[(2S,3R)-2-amino-8-carboxyoctan-3-yl]-L-lysyl-[protein] + CO2 + NAD(+) + H2O = (S)-2-amino-6-oxohexanoyl-[protein] + (7R,8S)-8-amino-7-(carboxyamino)nonanoate + NADH + 3 H(+). It functions in the pathway cofactor biosynthesis; biotin biosynthesis. A 'suicide' enzyme that participates in biotin synthesis. Catalyzes the formation of (S)-8-amino-7-oxononanoate (DAN-carbamic acid) from (7R,8S)-8-amino-7-(carboxyamino)nonanoate (DAN), a function equivalent to the cannonical BioA reaction and the first half-reaction of BioD. The cellular requirement for biotin is thought be low enough that this single turnover enzyme supplies a sufficient amount of the cofactor. Overall it catalyzes three reactions: formation of a covalent linkage with 8-amino-7-oxononanoate to yield a BioU-DAN conjugate at the epsilon-amino group of Lys124 of BioU using NAD(P)H, carboxylation of the conjugate to form BioU-DAN-carbamic acid, and release of DAN-carbamic acid using NAD(P)+. Complements a bioA deletion in E.coli. In Haloferax mediterranei (strain ATCC 33500 / DSM 1411 / JCM 8866 / NBRC 14739 / NCIMB 2177 / R-4) (Halobacterium mediterranei), this protein is (S)-8-amino-7-oxononanoate synthase BioU.